The following is a 234-amino-acid chain: 3-deoxy-manno-octulosonate cytidylyltransferase (234 aa).

It belongs to the KdsB family.

Its subcellular location is the cytoplasm. The catalysed reaction is 3-deoxy-alpha-D-manno-oct-2-ulosonate + CTP = CMP-3-deoxy-beta-D-manno-octulosonate + diphosphate. Its pathway is nucleotide-sugar biosynthesis; CMP-3-deoxy-D-manno-octulosonate biosynthesis; CMP-3-deoxy-D-manno-octulosonate from 3-deoxy-D-manno-octulosonate and CTP: step 1/1. It functions in the pathway bacterial outer membrane biogenesis; lipopolysaccharide biosynthesis. Its function is as follows. Activates KDO (a required 8-carbon sugar) for incorporation into bacterial lipopolysaccharide in Gram-negative bacteria. The chain is 3-deoxy-manno-octulosonate cytidylyltransferase from Aquifex aeolicus (strain VF5).